The sequence spans 129 residues: M-zodatoxin-Lt8l (129 aa).

Positions 1-20 (MKYFVVXXALVAAFACIAES) are cleaved as a signal peptide. Positions 21–60 (KPAESEHELAEVEEENELADLEDAVWLEDLADLSDLEETR) are excised as a propeptide.

It belongs to the cationic peptide 06 (cytoinsectotoxin) family. In terms of tissue distribution, expressed by the venom gland.

It localises to the secreted. In terms of biological role, insecticidal, cytolytic and antimicrobial peptide. Forms voltage-dependent, ion-permeable channels in membranes. At high concentration causes cell membrane lysis. The chain is M-zodatoxin-Lt8l (cit 1-12) from Lachesana tarabaevi (Spider).